We begin with the raw amino-acid sequence, 524 residues long: MVTITGCALCDALVILATLIVAAYLYYAVRFTYWKRKGVVNPKPLPVFGNFLPSVLQKRSPGQILWDIYKAAEAPFVGFYIFARPAILIKDPNIIKHVLVKDFNAFSDRHASAAESDTLGSQNLFTLNGAPWKYLRVKLSPTFTSGRMKKMYPLVESCAKQLQDYLKENCNTKAIEVKETTAKYATDVISTCAFGIESNSLKDPNAEFREFGRKIFEFTRYRTFEVMALFFSPGLVKFLNGNFFTKETTEFLRKVFWDTINFRESNKISRDDFMDLLIQLKNKGTIDNEDGEVTEKVDKIDKDSHLFEFTGDNLVSQPALFFTAGFETNATTLSFTLYELSLQPDLQNRLRSEIAGVMKTSNGKPTYEDVFGMPYLHMVVSETLRKYPPLPLLDRVCLQDYKVPGTDLIIERDTPVFIALLGLHRDPQYYPNPERYDPERFSEENKRQRKAYTYLPFGEGPHNCIGLRFGYMAVKTALVHMLAEFEVKPCKDTPIPLELSTRSSVLATTSGIPLTFVKSTAQVS.

Cysteine 464 is a heme binding site.

This sequence belongs to the cytochrome P450 family. Requires heme as cofactor.

It is found in the endoplasmic reticulum membrane. The protein resides in the microsome membrane. This Blattella germanica (German cockroach) protein is Cytochrome P450 6k1 (CYP6K1).